Consider the following 344-residue polypeptide: UDP-N-acetylenolpyruvoylglucosamine reductase (344 aa).

Residues 19-189 (INVTAKKIIF…IAVGIKIKKN (171 aa)) enclose the FAD-binding PCMH-type domain. Arg-165 is a catalytic residue. Catalysis depends on Ser-235, which acts as the Proton donor. Residue Glu-331 is part of the active site.

This sequence belongs to the MurB family. The cofactor is FAD.

The protein localises to the cytoplasm. It catalyses the reaction UDP-N-acetyl-alpha-D-muramate + NADP(+) = UDP-N-acetyl-3-O-(1-carboxyvinyl)-alpha-D-glucosamine + NADPH + H(+). Its pathway is cell wall biogenesis; peptidoglycan biosynthesis. Functionally, cell wall formation. The chain is UDP-N-acetylenolpyruvoylglucosamine reductase from Buchnera aphidicola subsp. Schizaphis graminum (strain Sg).